The sequence spans 240 residues: 2,3,4,5-tetrahydropyridine-2,6-dicarboxylate N-acetyltransferase (240 aa).

The protein belongs to the transferase hexapeptide repeat family. DapH subfamily.

It catalyses the reaction (S)-2,3,4,5-tetrahydrodipicolinate + acetyl-CoA + H2O = L-2-acetamido-6-oxoheptanedioate + CoA. The protein operates within amino-acid biosynthesis; L-lysine biosynthesis via DAP pathway; LL-2,6-diaminopimelate from (S)-tetrahydrodipicolinate (acetylase route): step 1/3. Functionally, catalyzes the transfer of an acetyl group from acetyl-CoA to tetrahydrodipicolinate. The chain is 2,3,4,5-tetrahydropyridine-2,6-dicarboxylate N-acetyltransferase from Staphylococcus epidermidis (strain ATCC 12228 / FDA PCI 1200).